The sequence spans 353 residues: Nicotinate-nucleotide--dimethylbenzimidazole phosphoribosyltransferase (353 aa).

The Proton acceptor role is filled by Glu319.

This sequence belongs to the CobT family.

The enzyme catalyses 5,6-dimethylbenzimidazole + nicotinate beta-D-ribonucleotide = alpha-ribazole 5'-phosphate + nicotinate + H(+). The protein operates within nucleoside biosynthesis; alpha-ribazole biosynthesis; alpha-ribazole from 5,6-dimethylbenzimidazole: step 1/2. Functionally, catalyzes the synthesis of alpha-ribazole-5'-phosphate from nicotinate mononucleotide (NAMN) and 5,6-dimethylbenzimidazole (DMB). This is Nicotinate-nucleotide--dimethylbenzimidazole phosphoribosyltransferase from Chlorobaculum parvum (strain DSM 263 / NCIMB 8327) (Chlorobium vibrioforme subsp. thiosulfatophilum).